The chain runs to 840 residues: Serotype-specific mannosyltransferase WbdA (840 aa).

The interval 2–399 (HILIDVQGYQ…WANTAHLAIE (398 aa)) is alpha-(1-&gt;2)-mannosyltransferase. Residues 456-829 (KLLVDISVLA…WKQSAEFLLK (374 aa)) are alpha-(1-&gt;3)-mannosyltransferase.

The protein belongs to the glycosyltransferase group 1 family. Glycosyltransferase 4 subfamily. In terms of assembly, monomer. Interacts with the C-terminal region of WbdD. Interacts with WbdD via a surface-exposed alpha-helix in the C-terminal mannosyltransferase domain. However, the C-terminal domain is unable to interact with WbdD in the absence of its N-terminal partner.

It is found in the cell inner membrane. It catalyses the reaction [alpha-D-Man-(1-&gt;3)-alpha-D-Man-(1-&gt;3)-alpha-D-Man-(1-&gt;2)-alpha-D-Man-(1-&gt;2)](n)-alpha-D-Man-(1-&gt;3)-alpha-D-Man-(1-&gt;3)-alpha-D-Man-(1-&gt;3)-alpha-D-GlcNAc-di-trans,octa-cis-undecaprenyl diphosphate + 2 GDP-alpha-D-mannose = alpha-D-Man-(1-&gt;2)-alpha-D-Man-(1-&gt;2)-[alpha-D-Man-(1-&gt;3)-alpha-D-Man-(1-&gt;3)-alpha-D-Man-(1-&gt;2)-alpha-D-Man-(1-&gt;2)](n)-alpha-D-Man-(1-&gt;3)-alpha-D-Man-(1-&gt;3)-alpha-D-Man-(1-&gt;3)-alpha-D-GlcNAc-di-trans,octa-cis-undecaprenyl diphosphate + 2 GDP + 2 H(+). The enzyme catalyses alpha-D-Man-(1-&gt;2)-alpha-D-Man-(1-&gt;2)-[alpha-D-Man-(1-&gt;3)-alpha-D-Man-(1-&gt;3)-alpha-D-Man-(1-&gt;2)-alpha-D-Man-(1-&gt;2)](n)-alpha-D-Man-(1-&gt;3)-alpha-D-Man-(1-&gt;3)-alpha-D-Man-(1-&gt;3)-alpha-D-GlcNAc-di-trans,octa-cis-undecaprenyl diphosphate + 2 GDP-alpha-D-mannose = [alpha-D-Man-(1-&gt;3)-alpha-D-Man-(1-&gt;3)-alpha-D-Man-(1-&gt;2)-alpha-D-Man-(1-&gt;2)](n+1)-alpha-D-Man-(1-&gt;3)-alpha-D-Man-(1-&gt;3)-alpha-D-Man-(1-&gt;3)-alpha-D-GlcNAc-di-trans,octa-cis-undecaprenyl diphosphate + 2 GDP + 2 H(+). Its pathway is bacterial outer membrane biogenesis; LPS O-antigen biosynthesis. With respect to regulation, the alpha-(1-&gt;2)-mannosyltransferase activity of the N-terminal domain is regulated by the activity of the C-terminal alpha-(1-&gt;3)-mannosyltransferase. The relative concentration of WbdA and WbdD is critical in determining the O polysaccharide (OPS) modal chain length. OPS chain length increases with increasing concentration of WbdA, but the maximum length does not increase beyond the wild-type modal length, despite substantial increases in WbdA concentration. Mannosyltransferase involved in the biosynthesis of the repeat unit of the lipopolysaccharide (LPS) O-antigen region. Catalyzes the polymerization of a tetrasaccharide repeat unit containing two alpha-(1-&gt;3)- and two alpha-(1-&gt;2)-linked mannopyranose residues. Extension is terminated by the action of the chain terminator bifunctional methyltransferase/kinase WbdD. The polypeptide is Serotype-specific mannosyltransferase WbdA (Escherichia coli).